The chain runs to 261 residues: INTITYDAGNTTINKYATFMESLRNEAKDPSLQCYGIPMLPNNSSTIKYLLVKLQGASQKTITLMLRRNNLYVMGYSDPFNGNCRYHIFNDITGTERTNVENTLCSSSSSRDAKPINYNSLYSTLEKKAEVNSRSQVQLGIQILSSDIGKISGQSSFTDKTEAKFLLVAIQMVSEAARFKYIENQVKTNFNRDFSPNDKILDLEENWGKISTAIHDATNGALPKPLELKNADGTKWIVLRVDEIKPDMGLLNYVNGTCQTT.

N10 and N43 each carry an N-linked (GlcNAc...) asparagine; in PD-L1 and PD-L2 glycan. Intrachain disulfides connect C34–C258 and C84–C105. The active site involves Y72. A substrate-binding site is contributed by V73. Substrate is bound at residue S120. Active-site residues include Y122, E175, and R178. R178 provides a ligand contact to substrate. N-linked (GlcNAc...) asparagine; in PD-L1 glycosylation is present at N255.

It belongs to the ribosome-inactivating protein family. Type 1 RIP subfamily. In terms of processing, N-glycosylated. Loss of glycosylation does not affect DNA-cleaving ability. Loss of glycosylation does not affect protein synthesis inhibition, but increases adenine polynucleotide glycosidase activity likely as a consequence of the increased accessibility of substrates to the active site pocket in the absence of glycosylation. In terms of tissue distribution, expressed in leaves (at protein level).

It carries out the reaction Endohydrolysis of the N-glycosidic bond at one specific adenosine on the 28S rRNA.. Its function is as follows. Inhibits protein synthesis. Has adenine polynucleotide glycosidase activity on herring sperm (hs)DNA and poly(A) substrates. Cleaves supercoiled pBR322 dsDNA. The chain is Ribosome-inactivating protein PD-L1/PD-L2 from Phytolacca dioica (Bella sombra tree).